Here is a 53-residue protein sequence, read N- to C-terminus: Bowman-Birk type proteinase inhibitor II-4 (53 aa).

4 disulfide bridges follow: cysteine 8/cysteine 23, cysteine 13/cysteine 21, cysteine 30/cysteine 37, and cysteine 34/cysteine 49.

Belongs to the Bowman-Birk serine protease inhibitor family.

In Triticum aestivum (Wheat), this protein is Bowman-Birk type proteinase inhibitor II-4.